Reading from the N-terminus, the 173-residue chain is Ribosome maturation factor RimM (173 aa).

In terms of domain architecture, PRC barrel spans 102-173; that stretch reads EGEYYWSDLI…TMLVDWDPEF (72 aa).

Belongs to the RimM family. In terms of assembly, binds ribosomal protein uS19.

The protein resides in the cytoplasm. Its function is as follows. An accessory protein needed during the final step in the assembly of 30S ribosomal subunit, possibly for assembly of the head region. Essential for efficient processing of 16S rRNA. May be needed both before and after RbfA during the maturation of 16S rRNA. It has affinity for free ribosomal 30S subunits but not for 70S ribosomes. This chain is Ribosome maturation factor RimM, found in Methylobacillus flagellatus (strain ATCC 51484 / DSM 6875 / VKM B-1610 / KT).